Consider the following 139-residue polypeptide: Nucleoside diphosphate kinase (139 aa).

ATP is bound by residues Lys11, Phe59, Arg87, Thr93, Arg104, and Asn114. His117 serves as the catalytic Pros-phosphohistidine intermediate.

It belongs to the NDK family. Homotetramer. Mg(2+) is required as a cofactor.

Its subcellular location is the cytoplasm. It carries out the reaction a 2'-deoxyribonucleoside 5'-diphosphate + ATP = a 2'-deoxyribonucleoside 5'-triphosphate + ADP. The catalysed reaction is a ribonucleoside 5'-diphosphate + ATP = a ribonucleoside 5'-triphosphate + ADP. Its function is as follows. Major role in the synthesis of nucleoside triphosphates other than ATP. The ATP gamma phosphate is transferred to the NDP beta phosphate via a ping-pong mechanism, using a phosphorylated active-site intermediate. The chain is Nucleoside diphosphate kinase from Pasteurella multocida (strain Pm70).